Consider the following 139-residue polypeptide: D-ribose pyranase (139 aa).

The active-site Proton donor is the H20. Substrate contacts are provided by residues D28, H106, and F128 to N130.

The protein belongs to the RbsD / FucU family. RbsD subfamily. Homodecamer.

It localises to the cytoplasm. It carries out the reaction beta-D-ribopyranose = beta-D-ribofuranose. Its pathway is carbohydrate metabolism; D-ribose degradation; D-ribose 5-phosphate from beta-D-ribopyranose: step 1/2. Its function is as follows. Catalyzes the interconversion of beta-pyran and beta-furan forms of D-ribose. This chain is D-ribose pyranase, found in Klebsiella pneumoniae (strain 342).